An 82-amino-acid polypeptide reads, in one-letter code: Small ribosomal subunit protein bS18 (82 aa).

Belongs to the bacterial ribosomal protein bS18 family. In terms of assembly, part of the 30S ribosomal subunit. Forms a tight heterodimer with protein bS6.

Functionally, binds as a heterodimer with protein bS6 to the central domain of the 16S rRNA, where it helps stabilize the platform of the 30S subunit. The sequence is that of Small ribosomal subunit protein bS18 from Chlamydia pneumoniae (Chlamydophila pneumoniae).